We begin with the raw amino-acid sequence, 446 residues long: MAVNPLLTPTGQQTIPLIPSPFGPPTVDRDVLPSTVAPTDPRQFCVPSQFGSSVLPNTNMANVLSSRIYPGWGILPPESIKAVARRNEMIQRHHTARTEMEMYAIYQQRRMEKINPKGLAGLGIPFLYGSSVPAAPAAYHGRSMLPAGDLHFHRSTLRNLQGNPMLAATAPHFEESWGQRCRRLRKNTGNQKALDSDAESSKSQAEEKILGQTHAVPYEEDHYAKDPDIEAPSNQKSSETNEKPTTALANTCGELEPTHRKPWGSHTTTLKAKAWDDGKEEASEQIFATCDEKNGVCPPVPRPSLPGTHALVTIGGNLSLDEDIQKWTVDDVHSFIRSLPGCSDYAQVFKDHAIDGETLPLLTEEHLRGTMGLKLGPALKIQSQVSQHVGSMFYKKTLSFPIRQAFDQPADTSPLLDPNSWSDTMNIFCPQDTIIPKGIERGSMRN.

The segment at 94–168 (HTARTEMEMY…NLQGNPMLAA (75 aa)) is required for localization to nuclear polycomb bodies. Disordered stretches follow at residues 187–207 (NTGN…QAEE) and 225–277 (KDPD…AWDD). Residues 232-249 (PSNQKSSETNEKPTTALA) are compositionally biased toward polar residues. The SAM domain occupies 327–392 (WTVDDVHSFI…SQVSQHVGSM (66 aa)).

Monomer, homodimer and homooligomer. Component of a Polycomb group (PcG) multiprotein PRC1-like complex. Interacts with PHC2, NR2E3 and SAMD11. Interacts with RNF1 in a PHC2-dependent manner. Expressed in the retina (at protein level). Expressed in the retinal inner and outer nuclear layers.

Its subcellular location is the nucleus. It localises to the cytoplasm. In terms of biological role, component of a Polycomb group (PcG) multiprotein PRC1-like complex, essential for establishing rod photoreceptor cell identity and function by silencing nonrod gene expression in developing rod photoreceptor cells. Via its association with the PRC1-like complex, promotes epigenetic repressive marks H3K27me3 and H2AK119ub marks in nonrod genes, silencing their transcription. Represses Crx-controlled photoreceptor-specific gene expression. The chain is Sterile alpha motif domain-containing protein 7 (SAMD7) from Homo sapiens (Human).